Here is a 145-residue protein sequence, read N- to C-terminus: Small ribosomal subunit protein eS19 (145 aa).

Lys-23 bears the N6-acetyllysine mark. Position 67 is an omega-N-methylarginine (Arg-67). N6-acetyllysine occurs at positions 111 and 115. Lys-143 bears the N6-succinyllysine mark.

This sequence belongs to the eukaryotic ribosomal protein eS19 family. As to quaternary structure, component of the small ribosomal subunit. Part of the small subunit (SSU) processome, composed of more than 70 proteins and the RNA chaperone small nucleolar RNA (snoRNA) U3. Interacts with RPS19BP1; the interaction is direct and mediates the integration of RPS19 in state post-A1. Interacts with RPS19BP1.

The protein resides in the cytoplasm. Its subcellular location is the nucleus. It localises to the nucleolus. Functionally, component of the small ribosomal subunit. The ribosome is a large ribonucleoprotein complex responsible for the synthesis of proteins in the cell. Required for pre-rRNA processing and maturation of 40S ribosomal subunits. Part of the small subunit (SSU) processome, first precursor of the small eukaryotic ribosomal subunit. During the assembly of the SSU processome in the nucleolus, many ribosome biogenesis factors, an RNA chaperone and ribosomal proteins associate with the nascent pre-rRNA and work in concert to generate RNA folding, modifications, rearrangements and cleavage as well as targeted degradation of pre-ribosomal RNA by the RNA exosome. The chain is Small ribosomal subunit protein eS19 (RPS19) from Pongo abelii (Sumatran orangutan).